The chain runs to 707 residues: Prolyl endopeptidase-like (707 aa).

Residues serine 538, aspartate 624, and histidine 670 each act as charge relay system in the active site.

Belongs to the peptidase S9A family. In terms of assembly, homodimer.

Its subcellular location is the cytoplasm. It is found in the cytosol. In terms of biological role, serine peptidase whose precise substrate specificity remains unclear. Does not cleave peptides after a arginine or lysine residue. Regulates trans-Golgi network morphology and sorting by regulating the membrane binding of the AP-1 complex. May play a role in the regulation of synaptic vesicle exocytosis. The sequence is that of Prolyl endopeptidase-like (prepl) from Xenopus laevis (African clawed frog).